Reading from the N-terminus, the 367-residue chain is Mitochondrial GTPase 1 (367 aa).

The CP-type G domain occupies 42 to 228; sequence LKTFEKLLPQ…LIDTPGIGVP (187 aa). GTP-binding positions include 89–92, 160–165, and G224; these read TRKD and NVGKST.

Belongs to the TRAFAC class YlqF/YawG GTPase family. MTG1 subfamily.

It localises to the mitochondrion inner membrane. Mitochondrial GTPase involved in assembly of the large ribosomal subunit. Plays a role in expression of the mitochondrial translational machinery. In Saccharomyces cerevisiae (strain ATCC 204508 / S288c) (Baker's yeast), this protein is Mitochondrial GTPase 1 (MTG1).